The following is a 195-amino-acid chain: Ephrin-A2 (195 aa).

An N-terminal signal peptide occupies residues 1–16; that stretch reads MELSLVVFTVVCWVSV. Residues 24 to 157 form the Ephrin RBD domain; sequence SDRHAVYWNS…KLKVYVKPTS (134 aa). Asparagine 32 is a glycosylation site (N-linked (GlcNAc...) asparagine). 2 cysteine pairs are disulfide-bonded: cysteine 57-cysteine 97 and cysteine 85-cysteine 146. Cysteine 174 carries GPI-anchor amidated cysteine lipidation. The propeptide at 175–195 is removed in mature form; it reads GADGPCLAVLMLLLVFLLAGV.

This sequence belongs to the ephrin family. As to quaternary structure, binds to the receptor tyrosine kinases epha2, epha3, epha4 and epha5. Interacts with epha8; activates epha8. Widespread expression in the embryo.

The protein resides in the cell membrane. In terms of biological role, cell surface GPI-bound ligand for Eph receptors, a family of receptor tyrosine kinases which are crucial for migration, repulsion and adhesion during neuronal, vascular and epithelial development. Binds promiscuously Eph receptors residing on adjacent cells, leading to contact-dependent bidirectional signaling into neighboring cells. The signaling pathway downstream of the receptor is referred to as forward signaling while the signaling pathway downstream of the ephrin ligand is referred to as reverse signaling. With the epha2 receptor may play a role in bone remodeling through regulation of osteoclastogenesis and osteoblastogenesis. This chain is Ephrin-A2 (efna2), found in Danio rerio (Zebrafish).